Here is a 199-residue protein sequence, read N- to C-terminus: MLLDLSEEHKEHLAFLPQVDTAVVAEFGRIAVEFLRRGSNPKIYEGAARKLNVSSDTIQHGVEGLTYLLTESSKLMISELDFQDSVFVLGFSEELNKLLLQLYLDNRKEIRTILNELAPRLPSYHSLEWRLDVQLASRSLRQQIKPAVTIKLHLDQNGDHSTHFLQTDPATLLHLVQQLEQALEEMKTNHCRRVVRSIK.

The region spanning 123-190 (SYHSLEWRLD…QALEEMKTNH (68 aa)) is the COMM domain.

It belongs to the COMM domain-containing protein 2 family. Component of the commander complex consisting of the CCC subcomplex and the retriever subcomplex. Component of the CCC (COMMD/CCDC22/CCDC93) subcomplex consisting of COMMD1, COMMD2, COMMD3, COMMD4, COMMD5, COMMD6, COMMD7, COMMD8, COMMD9, COMMD10, CCDC22 and CCDC93; within the complex forms a heterodimer with COMMD3. Interacts with RELA, RELB, NFKB1/p105, NFKB2/p100. Interacts with CCDC22, CCDC93, SCNN1B, CUL3, CUL4B, CUL5, CUL7.

Its subcellular location is the cytoplasm. Scaffold protein in the commander complex that is essential for endosomal recycling of transmembrane cargos; the commander complex is composed of the CCC subcomplex and the retriever subcomplex. May modulate activity of cullin-RING E3 ubiquitin ligase (CRL) complexes. May down-regulate activation of NF-kappa-B. The protein is COMM domain-containing protein 2 (Commd2) of Mus musculus (Mouse).